Reading from the N-terminus, the 416-residue chain is Serine hydroxymethyltransferase (416 aa).

(6S)-5,6,7,8-tetrahydrofolate contacts are provided by residues L118 and 122–124; that span reads GHL. K226 carries the post-translational modification N6-(pyridoxal phosphate)lysine. Residues E242 and 350-352 contribute to the (6S)-5,6,7,8-tetrahydrofolate site; that span reads SPF.

This sequence belongs to the SHMT family. In terms of assembly, homodimer. The cofactor is pyridoxal 5'-phosphate.

It localises to the cytoplasm. It catalyses the reaction (6R)-5,10-methylene-5,6,7,8-tetrahydrofolate + glycine + H2O = (6S)-5,6,7,8-tetrahydrofolate + L-serine. The protein operates within one-carbon metabolism; tetrahydrofolate interconversion. It functions in the pathway amino-acid biosynthesis; glycine biosynthesis; glycine from L-serine: step 1/1. Catalyzes the reversible interconversion of serine and glycine with tetrahydrofolate (THF) serving as the one-carbon carrier. This reaction serves as the major source of one-carbon groups required for the biosynthesis of purines, thymidylate, methionine, and other important biomolecules. Also exhibits THF-independent aldolase activity toward beta-hydroxyamino acids, producing glycine and aldehydes, via a retro-aldol mechanism. This Wolinella succinogenes (strain ATCC 29543 / DSM 1740 / CCUG 13145 / JCM 31913 / LMG 7466 / NCTC 11488 / FDC 602W) (Vibrio succinogenes) protein is Serine hydroxymethyltransferase.